The following is a 217-amino-acid chain: Pyridoxine/pyridoxamine 5'-phosphate oxidase (217 aa).

Substrate-binding positions include 13–16 (RREY) and lysine 71. Residues 66–71 (RIVLLK), 81–82 (YT), arginine 87, lysine 88, and glutamine 110 contribute to the FMN site. Substrate is bound by residues tyrosine 128, arginine 132, and serine 136. FMN-binding positions include 145–146 (QS) and tryptophan 190. Position 196 to 198 (196 to 198 (RLH)) interacts with substrate. Arginine 200 contributes to the FMN binding site.

This sequence belongs to the pyridoxamine 5'-phosphate oxidase family. In terms of assembly, homodimer. It depends on FMN as a cofactor.

The catalysed reaction is pyridoxamine 5'-phosphate + O2 + H2O = pyridoxal 5'-phosphate + H2O2 + NH4(+). It catalyses the reaction pyridoxine 5'-phosphate + O2 = pyridoxal 5'-phosphate + H2O2. It participates in cofactor metabolism; pyridoxal 5'-phosphate salvage; pyridoxal 5'-phosphate from pyridoxamine 5'-phosphate: step 1/1. Its pathway is cofactor metabolism; pyridoxal 5'-phosphate salvage; pyridoxal 5'-phosphate from pyridoxine 5'-phosphate: step 1/1. Functionally, catalyzes the oxidation of either pyridoxine 5'-phosphate (PNP) or pyridoxamine 5'-phosphate (PMP) into pyridoxal 5'-phosphate (PLP). This chain is Pyridoxine/pyridoxamine 5'-phosphate oxidase, found in Yersinia pestis bv. Antiqua (strain Antiqua).